The sequence spans 343 residues: N-malonyltransferase FDB2 (343 aa).

Cys107 functions as the Acyl-thioester intermediate in the catalytic mechanism. The active-site Proton acceptor is the His155. Residue Asp170 is part of the active site.

The protein belongs to the arylamine N-acetyltransferase family.

The protein operates within xenobiotic degradation. Functionally, N-malonyltransferase; part of the Fusarium detoxification of benzoxazolinone cluster involved in the degradation of benzoxazolinones produced by the host plant. Maize, wheat, and rye produce the 2 benzoxazinone phytoanticipins 2,4-dihy-droxy-7-methoxy-1,4-benzoxazin-3-one (DIMBOA) and 2,4-dihydroxy-1,4-benzoxazin-3-one (DIBOA) that, due to their inherent instability once released, spontaneously degrade to the more stable corresponding benzoxazolinones, 6-methoxy-2-benzoxazolinone (MBOA) and 2-benzoxazolinone (BOA), respectively. The first step in the detoxification of benzoxazolinones involves the hydrolysis of the cyclic ester bond of benzoxazolinones by the gamma-lactamase FDB1 to aminophenols. FDB1 is able to convert BOA into 2-aminophenol (2-AP), as well as MBOA into 5-methoxy-2-aminophenol (2-AMP). The N-malonyltransferase FDB2 then metabolizes aminophenols via N-malonylation to non-toxic malonamic acids. FDB2 converts 2-AP into N-(2-hydroxyphenyl) malonamic acid (HPMA) and 2-AMP into N-(2-hydroxy-4-methoxyphenyl) malonamic acid (HMPMA). The cluster also contains 2 transcription factors (FDB3 and FPSE_08121), an aldo-keto reductase (FPSE_08125) that possibly associates with a ketone component of BOA and MBOA degradation, an esterase (FPSE_08126), an acyl-CoA transferase (FPSE_08120), a solute carrier protein (FPSE_08119) and a transmembrane transporter (FPSE_08127) proposed to shuttle metabolites of benzoxazolinone degradation. This is N-malonyltransferase FDB2 from Fusarium pseudograminearum (strain CS3096) (Wheat and barley crown-rot fungus).